A 497-amino-acid polypeptide reads, in one-letter code: uncharacterized protein (497 aa).

Ca(2+) contacts are provided by D12, T13, and C52. Residue C52 is the Nucleophile of the active site. The residue at position 52 (C52) is a 3-oxoalanine (Cys). H102 is an active-site residue. Ca(2+) contacts are provided by D284 and H285.

It belongs to the sulfatase family. Ca(2+) is required as a cofactor. The conversion to 3-oxoalanine (also known as C-formylglycine, FGly), of a serine or cysteine residue in prokaryotes and of a cysteine residue in eukaryotes, is critical for catalytic activity.

This is an uncharacterized protein from Escherichia coli (strain K12).